A 270-amino-acid polypeptide reads, in one-letter code: Putative phosphoenolpyruvate synthase regulatory protein (270 aa).

149–156 (GVSRSGKT) contacts ADP.

The protein belongs to the pyruvate, phosphate/water dikinase regulatory protein family. PSRP subfamily.

It carries out the reaction [pyruvate, water dikinase] + ADP = [pyruvate, water dikinase]-phosphate + AMP + H(+). The catalysed reaction is [pyruvate, water dikinase]-phosphate + phosphate + H(+) = [pyruvate, water dikinase] + diphosphate. Functionally, bifunctional serine/threonine kinase and phosphorylase involved in the regulation of the phosphoenolpyruvate synthase (PEPS) by catalyzing its phosphorylation/dephosphorylation. This is Putative phosphoenolpyruvate synthase regulatory protein from Pseudoalteromonas atlantica (strain T6c / ATCC BAA-1087).